The sequence spans 190 residues: DNA dC-&gt;dU-editing enzyme APOBEC-3C (190 aa).

Residues 29-138 (DRNETWLCFT…TDYQEGLRSL (110 aa)) enclose the CMP/dCMP-type deaminase domain. Residues histidine 66, cysteine 97, and cysteine 100 each contribute to the Zn(2+) site.

Belongs to the cytidine and deoxycytidylate deaminase family. Homodimer. Interacts with TRIB3. Zn(2+) serves as cofactor.

It is found in the nucleus. The protein resides in the cytoplasm. It catalyses the reaction a 2'-deoxycytidine in single-stranded DNA + H2O + H(+) = a 2'-deoxyuridine in single-stranded DNA + NH4(+). Functionally, DNA deaminase (cytidine deaminase) which acts as an inhibitor of retrovirus replication and retrotransposon mobility via deaminase-dependent and -independent mechanisms. May also play a role in the epigenetic regulation of gene expression through the process of active DNA demethylation. The sequence is that of DNA dC-&gt;dU-editing enzyme APOBEC-3C (APOBEC3C) from Gorilla gorilla gorilla (Western lowland gorilla).